A 62-amino-acid polypeptide reads, in one-letter code: DNA-directed RNA polymerase subunit Rpo10 (62 aa).

Zn(2+) contacts are provided by C6, C9, C43, and C44.

It belongs to the archaeal Rpo10/eukaryotic RPB10 RNA polymerase subunit family. In terms of assembly, part of the RNA polymerase complex. Zn(2+) is required as a cofactor.

The protein localises to the cytoplasm. The enzyme catalyses RNA(n) + a ribonucleoside 5'-triphosphate = RNA(n+1) + diphosphate. Its function is as follows. DNA-dependent RNA polymerase (RNAP) catalyzes the transcription of DNA into RNA using the four ribonucleoside triphosphates as substrates. This Methanoculleus marisnigri (strain ATCC 35101 / DSM 1498 / JR1) protein is DNA-directed RNA polymerase subunit Rpo10.